Reading from the N-terminus, the 178-residue chain is Inner membrane-spanning protein YciB (178 aa).

The next 6 helical transmembrane spans lie at 1–21 (MKIL…KMTG), 23–43 (IIIA…FTWF), 51–71 (MHLV…LLGD), 77–97 (WKPT…QFIG), 120–140 (LNLA…YVAF), and 150–170 (FKLF…GIYL).

Belongs to the YciB family.

The protein resides in the cell inner membrane. In terms of biological role, plays a role in cell envelope biogenesis, maintenance of cell envelope integrity and membrane homeostasis. The protein is Inner membrane-spanning protein YciB of Marinomonas sp. (strain MWYL1).